A 365-amino-acid polypeptide reads, in one-letter code: Outer membrane porin protein LC (365 aa).

Positions 1 to 23 (MKKLTVAISAVAASVLMAMSAQA) are cleaved as a signal peptide.

Belongs to the Gram-negative porin family. As to quaternary structure, homotrimer.

The protein resides in the host cell outer membrane. In terms of biological role, forms pores that allow passive diffusion of small molecules across the host cell outer membrane. This is Outer membrane porin protein LC (LC) from Enterobacteria phage PA-2 (Bacteriophage PA-2).